We begin with the raw amino-acid sequence, 492 residues long: Trypanothione reductase (492 aa).

Residue 35–52 coordinates FAD; that stretch reads DVQTVHGPPFFAALGGTC. A disulfide bridge connects residues C52 and C57. Residue H461 is the Proton acceptor of the active site.

This sequence belongs to the class-I pyridine nucleotide-disulfide oxidoreductase family. In terms of assembly, homodimer. FAD serves as cofactor.

It is found in the cytoplasm. The enzyme catalyses trypanothione + NADP(+) = trypanothione disulfide + NADPH + H(+). Its function is as follows. Trypanothione is the parasite analog of glutathione; this enzyme is the equivalent of glutathione reductase. The chain is Trypanothione reductase (TPR) from Trypanosoma congolense.